The chain runs to 153 residues: UPF0235 protein C15orf40 (153 aa).

The segment covering 1 to 12 (MLRLRSGLRHLR) has biased composition (basic residues). The disordered stretch occupies residues 1-55 (MLRLRSGLRHLRATPNTRGSARLLCAEMPKKAGATTKGKSQSKEPERPLPPLGPV). The residue at position 116 (Ser-116) is a Phosphoserine.

It belongs to the UPF0235 family.

In Homo sapiens (Human), this protein is UPF0235 protein C15orf40 (C15orf40).